We begin with the raw amino-acid sequence, 213 residues long: Orotate phosphoribosyltransferase (213 aa).

Lys-26 lines the 5-phospho-alpha-D-ribose 1-diphosphate pocket. 34-35 (FF) provides a ligand contact to orotate. 5-phospho-alpha-D-ribose 1-diphosphate is bound by residues 72–73 (YK), Arg-99, Lys-100, Lys-103, His-105, and 124–132 (DDVITAGTA). Orotate is bound by residues Thr-128 and Arg-156.

Belongs to the purine/pyrimidine phosphoribosyltransferase family. PyrE subfamily. As to quaternary structure, homodimer. Mg(2+) serves as cofactor.

It carries out the reaction orotidine 5'-phosphate + diphosphate = orotate + 5-phospho-alpha-D-ribose 1-diphosphate. Its pathway is pyrimidine metabolism; UMP biosynthesis via de novo pathway; UMP from orotate: step 1/2. Functionally, catalyzes the transfer of a ribosyl phosphate group from 5-phosphoribose 1-diphosphate to orotate, leading to the formation of orotidine monophosphate (OMP). The sequence is that of Orotate phosphoribosyltransferase from Pseudomonas syringae pv. syringae (strain B728a).